A 378-amino-acid polypeptide reads, in one-letter code: Forkhead box protein F1 (378 aa).

The interval 1–45 (MSAPDKQQPPHGGGTGGGGGAGGQAMDPAAAGPTKAKKTNAGVRR) is disordered. Over residues 11-23 (HGGGTGGGGGAGG) the composition is skewed to gly residues. Over residues 24 to 42 (QAMDPAAAGPTKAKKTNAG) the composition is skewed to low complexity. The fork-head DNA-binding region spans 47-138 (EKPPYSYIAL…EFMFEEGSFR (92 aa)).

Expressed primarily in lung in alveolar type II pneumocyte cells, and to a lesser extent in placenta, stomach, intestine and colon.

The protein resides in the nucleus. Functionally, probable transcription activator for a number of lung-specific genes. The protein is Forkhead box protein F1 (Foxf1) of Mus musculus (Mouse).